Reading from the N-terminus, the 157-residue chain is Arginine repressor (157 aa).

This sequence belongs to the ArgR family.

Its subcellular location is the cytoplasm. It participates in amino-acid biosynthesis; L-arginine biosynthesis [regulation]. In terms of biological role, regulates arginine biosynthesis genes. The sequence is that of Arginine repressor from Bacteroides fragilis (strain ATCC 25285 / DSM 2151 / CCUG 4856 / JCM 11019 / LMG 10263 / NCTC 9343 / Onslow / VPI 2553 / EN-2).